The following is a 140-amino-acid chain: Putative peptidyl-tRNA hydrolase PTRHD1 (140 aa).

This sequence belongs to the PTH2 family. PTRHD1 subfamily.

The enzyme catalyses an N-acyl-L-alpha-aminoacyl-tRNA + H2O = an N-acyl-L-amino acid + a tRNA + H(+). Its function is as follows. As a putative peptidyl-tRNA hydrolase, it might be involved in releasing tRNAs from the ribosome during protein synthesis. Some evidence, however, suggests that it lacks peptidyl-tRNA hydrolase activity. This is Putative peptidyl-tRNA hydrolase PTRHD1 (Ptrhd1) from Mus musculus (Mouse).